The following is a 212-amino-acid chain: Cytidylate kinase (212 aa).

Residue G11–T19 participates in ATP binding. The segment at G50–L69 is disordered.

This sequence belongs to the cytidylate kinase family. Type 1 subfamily.

The protein localises to the cytoplasm. The catalysed reaction is CMP + ATP = CDP + ADP. It carries out the reaction dCMP + ATP = dCDP + ADP. The protein is Cytidylate kinase of Acidiphilium cryptum (strain JF-5).